Reading from the N-terminus, the 60-residue chain is Mastoparan-VT5 (60 aa).

Residues 1-27 form the signal peptide; the sequence is MKNTILILFTAFIALLGFFGMIAEPLA. AXPX repeat units follow at residues 27–30, 31–34, 37–40, and 41–44; these read ADPL, ADPD, and ADPE. Positions 28–45 are excised as a propeptide; the sequence is DPLADPLPDADPDADPET.

This sequence belongs to the MCD family. Mastoparan subfamily. Expressed by the venom gland.

It localises to the secreted. Its function is as follows. The synthetic peptide shows weak antimicrobial activities against a few Gram-positive bacteria (only 2 on the 11 strains tested) and the fungus C.albicans. Does not show activity against all the Gram-negative bacteria tested. Exhibits little hemolytic activity against washed human erythrocytes. The polypeptide is Mastoparan-VT5 (Vespa tropica (Greater banded hornet)).